The primary structure comprises 371 residues: Phospho-N-acetylmuramoyl-pentapeptide-transferase (371 aa).

The next 9 helical transmembrane spans lie at 19-39, 48-68, 95-115, 119-139, 155-175, 180-200, 227-247, 284-304, and 349-369; these read LYWLLLLCLSGVALATDIYSG, IVAPLWTSTLVVTLLGFWAVP, TMGGIFFMPVALVLGWAWVAA, NLLEVSAAVLLTLCLGLVGWF, AKLRLGIELGSGLIFGLWLFL, ISGLALPFGLSLPIGVLFLAI, AIAFLGLALVVAPSWPGLMIF, AVGLITNTLWALLILSGLFLV, and VVSTFYACVAVLAVAACGLNA.

This sequence belongs to the glycosyltransferase 4 family. MraY subfamily. It depends on Mg(2+) as a cofactor.

It is found in the cell inner membrane. It carries out the reaction UDP-N-acetyl-alpha-D-muramoyl-L-alanyl-gamma-D-glutamyl-meso-2,6-diaminopimeloyl-D-alanyl-D-alanine + di-trans,octa-cis-undecaprenyl phosphate = di-trans,octa-cis-undecaprenyl diphospho-N-acetyl-alpha-D-muramoyl-L-alanyl-D-glutamyl-meso-2,6-diaminopimeloyl-D-alanyl-D-alanine + UMP. It functions in the pathway cell wall biogenesis; peptidoglycan biosynthesis. Catalyzes the initial step of the lipid cycle reactions in the biosynthesis of the cell wall peptidoglycan: transfers peptidoglycan precursor phospho-MurNAc-pentapeptide from UDP-MurNAc-pentapeptide onto the lipid carrier undecaprenyl phosphate, yielding undecaprenyl-pyrophosphoryl-MurNAc-pentapeptide, known as lipid I. The chain is Phospho-N-acetylmuramoyl-pentapeptide-transferase from Acaryochloris marina (strain MBIC 11017).